The following is a 352-amino-acid chain: Isoflavone-7-O-methyltransferase 6 (352 aa).

Residue 118–127 participates in substrate binding; sequence VLDPTLSGSY. Residues Gly-196, Asp-219, Asp-239, Met-240, and Lys-253 each contribute to the S-adenosyl-L-methionine site. The Proton acceptor role is filled by His-257.

Belongs to the class I-like SAM-binding methyltransferase superfamily. Cation-independent O-methyltransferase family. COMT subfamily. As to quaternary structure, homodimer.

The enzyme catalyses a 7-hydroxyisoflavone + S-adenosyl-L-methionine = a 7-methoxyisoflavone + S-adenosyl-L-homocysteine + H(+). The protein operates within phytoalexin biosynthesis; medicarpin biosynthesis. Transfers a methyl group to 7-hydroxyls of the isoflavones daidzein, genistein and 6,7,4'-trihydroxyisoflavone. Can also methylate (+)6a-hydroxymaackiain with lower efficiency. The sequence is that of Isoflavone-7-O-methyltransferase 6 from Medicago sativa (Alfalfa).